A 479-amino-acid polypeptide reads, in one-letter code: Altronate oxidoreductase (479 aa).

18-29 is a binding site for NAD(+); sequence IIQFGEGNFLRA.

It belongs to the mannitol dehydrogenase family. UxaB subfamily.

The catalysed reaction is D-altronate + NAD(+) = keto-D-tagaturonate + NADH + H(+). Its pathway is carbohydrate metabolism; pentose and glucuronate interconversion. In Bacteroides thetaiotaomicron (strain ATCC 29148 / DSM 2079 / JCM 5827 / CCUG 10774 / NCTC 10582 / VPI-5482 / E50), this protein is Altronate oxidoreductase.